We begin with the raw amino-acid sequence, 73 residues long: MSCCGGSCGCGSGCKCGSGCGGCGMYPDLESTTTFTIIEGVAPMKNYGVAEKATEGGNGCKCGSNCTCDPCNC.

The protein belongs to the metallothionein superfamily. Type 15 family.

In terms of biological role, metallothioneins have a high content of cysteine residues that bind various heavy metals. The chain is Metallothionein-like protein type 2 from Solanum lycopersicum (Tomato).